Reading from the N-terminus, the 172-residue chain is Putative RNA polymerase II transcriptional coactivator (172 aa).

Disordered regions lie at residues 1–43 (MPPK…QDGN) and 123–172 (QTDA…DDDE). A compositionally biased stretch (polar residues) spans 24 to 43 (GNTGKAQPQELTKGSDQDGN). A compositionally biased stretch (basic and acidic residues) spans 131–144 (PKVKALESNKESIK). Positions 158-172 (TSDEEEAAEDEDDDE) are enriched in acidic residues.

This sequence belongs to the transcriptional coactivator PC4 family.

The protein localises to the nucleus. Functionally, general coactivator that functions cooperatively with TAFs and mediates functional interactions between upstream activators and the general transcriptional machinery. Binds single-stranded DNA. This is Putative RNA polymerase II transcriptional coactivator from Neurospora crassa (strain ATCC 24698 / 74-OR23-1A / CBS 708.71 / DSM 1257 / FGSC 987).